Consider the following 90-residue polypeptide: UPF0223 protein SH1855 (90 aa).

The protein belongs to the UPF0223 family.

The protein is UPF0223 protein SH1855 of Staphylococcus haemolyticus (strain JCSC1435).